A 419-amino-acid polypeptide reads, in one-letter code: Serine--tRNA ligase (419 aa).

226–228 (TSE) provides a ligand contact to L-serine. ATP is bound by residues 257 to 259 (RRE) and Val273. Position 280 (Glu280) interacts with L-serine. 344 to 347 (ELTS) contributes to the ATP binding site. Position 379 (Thr379) interacts with L-serine.

This sequence belongs to the class-II aminoacyl-tRNA synthetase family. Type-1 seryl-tRNA synthetase subfamily. Homodimer. The tRNA molecule binds across the dimer.

Its subcellular location is the cytoplasm. The enzyme catalyses tRNA(Ser) + L-serine + ATP = L-seryl-tRNA(Ser) + AMP + diphosphate + H(+). It catalyses the reaction tRNA(Sec) + L-serine + ATP = L-seryl-tRNA(Sec) + AMP + diphosphate + H(+). Its pathway is aminoacyl-tRNA biosynthesis; selenocysteinyl-tRNA(Sec) biosynthesis; L-seryl-tRNA(Sec) from L-serine and tRNA(Sec): step 1/1. In terms of biological role, catalyzes the attachment of serine to tRNA(Ser). Is also able to aminoacylate tRNA(Sec) with serine, to form the misacylated tRNA L-seryl-tRNA(Sec), which will be further converted into selenocysteinyl-tRNA(Sec). The protein is Serine--tRNA ligase of Mycolicibacterium vanbaalenii (strain DSM 7251 / JCM 13017 / BCRC 16820 / KCTC 9966 / NRRL B-24157 / PYR-1) (Mycobacterium vanbaalenii).